A 557-amino-acid polypeptide reads, in one-letter code: Phosphoacetylglucosamine mutase (557 aa).

Residue S67 is the Phosphoserine intermediate of the active site. Positions 67, 298, 300, and 302 each coordinate Mg(2+). A Phosphoserine modification is found at S67. Substrate-binding positions include E395–N397, R522–T526, and R531.

It belongs to the phosphohexose mutase family. Requires Mg(2+) as cofactor.

It is found in the cytoplasm. Its subcellular location is the nucleus. It catalyses the reaction N-acetyl-alpha-D-glucosamine 1-phosphate = N-acetyl-D-glucosamine 6-phosphate. It participates in nucleotide-sugar biosynthesis; UDP-N-acetyl-alpha-D-glucosamine biosynthesis; N-acetyl-alpha-D-glucosamine 1-phosphate from alpha-D-glucosamine 6-phosphate (route I): step 2/2. Functionally, catalyzes the conversion of GlcNAc-6-P into GlcNAc-1-P during the synthesis of uridine diphosphate/UDP-GlcNAc, which is a biosynthetic precursor of chitin and also supplies the amino sugars for N-linked oligosaccharides of glycoproteins. Also has phosphoglucomutase activity. This is Phosphoacetylglucosamine mutase from Saccharomyces cerevisiae (strain ATCC 204508 / S288c) (Baker's yeast).